A 118-amino-acid polypeptide reads, in one-letter code: Small ribosomal subunit protein uS13 (118 aa).

Residues 94–118 (GLPLRGQRTRTNARTRKGPRRPIRK) are disordered.

This sequence belongs to the universal ribosomal protein uS13 family. Part of the 30S ribosomal subunit. Forms a loose heterodimer with protein S19. Forms two bridges to the 50S subunit in the 70S ribosome.

Functionally, located at the top of the head of the 30S subunit, it contacts several helices of the 16S rRNA. In the 70S ribosome it contacts the 23S rRNA (bridge B1a) and protein L5 of the 50S subunit (bridge B1b), connecting the 2 subunits; these bridges are implicated in subunit movement. Contacts the tRNAs in the A and P-sites. This chain is Small ribosomal subunit protein uS13, found in Thioalkalivibrio sulfidiphilus (strain HL-EbGR7).